Reading from the N-terminus, the 144-residue chain is Large ribosomal subunit protein uL16c (144 aa).

Belongs to the universal ribosomal protein uL16 family. Part of the 50S ribosomal subunit.

It localises to the plastid. Its subcellular location is the chloroplast. In Chara vulgaris (Common stonewort), this protein is Large ribosomal subunit protein uL16c.